The sequence spans 366 residues: Chitoporin (366 aa).

The first 23 residues, 1–23 (MDKMFKRTVIGAAVALASTGLMA), serve as a signal peptide directing secretion.

Belongs to the Gram-negative porin family.

It localises to the cell outer membrane. Functionally, involved in the uptake of chitosugars. In Vibrio furnissii, this protein is Chitoporin (chiP).